Reading from the N-terminus, the 130-residue chain is uncharacterized protein (130 aa).

A helical transmembrane segment spans residues 15 to 31 (LYLCPAIIRLSSVCTLA).

The protein localises to the membrane. This is an uncharacterized protein from Saccharomyces cerevisiae (strain ATCC 204508 / S288c) (Baker's yeast).